Here is a 168-residue protein sequence, read N- to C-terminus: Photosystem I assembly protein Ycf3 (168 aa).

3 TPR repeats span residues 35 to 68, 72 to 105, and 120 to 153; these read AFTYYRDGMSAQSEGNYAEALQNYYEAMRLEIDP, SYILYNIGLIHTSNGEHTKALEYYFRALERNPFL, and GEQAIRQGDSEIAEAWFDQAAEYWKQAIALTPGN.

The protein belongs to the Ycf3 family.

It is found in the plastid. It localises to the chloroplast thylakoid membrane. In terms of biological role, essential for the assembly of the photosystem I (PSI) complex. May act as a chaperone-like factor to guide the assembly of the PSI subunits. The chain is Photosystem I assembly protein Ycf3 from Helianthus annuus (Common sunflower).